A 344-amino-acid chain; its full sequence is GTP 3',8-cyclase (344 aa).

The Radical SAM core domain occupies 19-244 (PFGRTISYLR…MDLAESTGGP (226 aa)). A GTP-binding site is contributed by arginine 28. [4Fe-4S] cluster is bound by residues cysteine 35 and cysteine 39. Position 41 (tyrosine 41) interacts with S-adenosyl-L-methionine. Cysteine 42 is a [4Fe-4S] cluster binding site. A GTP-binding site is contributed by arginine 77. Glycine 81 lines the S-adenosyl-L-methionine pocket. Position 111 (threonine 111) interacts with GTP. Serine 135 is a binding site for S-adenosyl-L-methionine. Lysine 171 serves as a coordination point for GTP. Methionine 205 is a binding site for S-adenosyl-L-methionine. [4Fe-4S] cluster-binding residues include cysteine 268 and cysteine 271. A GTP-binding site is contributed by 273-275 (RVR). Position 285 (cysteine 285) interacts with [4Fe-4S] cluster.

It belongs to the radical SAM superfamily. MoaA family. Monomer and homodimer. The cofactor is [4Fe-4S] cluster.

The catalysed reaction is GTP + AH2 + S-adenosyl-L-methionine = (8S)-3',8-cyclo-7,8-dihydroguanosine 5'-triphosphate + 5'-deoxyadenosine + L-methionine + A + H(+). The protein operates within cofactor biosynthesis; molybdopterin biosynthesis. Catalyzes the cyclization of GTP to (8S)-3',8-cyclo-7,8-dihydroguanosine 5'-triphosphate. The polypeptide is GTP 3',8-cyclase (Bradyrhizobium diazoefficiens (strain JCM 10833 / BCRC 13528 / IAM 13628 / NBRC 14792 / USDA 110)).